A 364-amino-acid polypeptide reads, in one-letter code: Autophagy-related protein 14 (364 aa).

Residues 5–20 (CPICETQSHVFYCAHC) are cysteine repeats. Residues 38 to 114 (LGKINNALRN…QDRRIKEKSR (77 aa)) are a coiled coil.

Belongs to the ATG14 family. In terms of assembly, component of the autophagy-specific VPS34 PI3-kinase complex I composed of VPS15, VPS30, VPS34, ATG14 and ATG38. Interacts directly with ATG38.

It is found in the preautophagosomal structure membrane. The protein localises to the vacuole membrane. Functionally, required for cytoplasm to vacuole transport (Cvt) and autophagy as a part of the autophagy-specific VPS34 PI3-kinase complex I. This complex is essential to recruit the ATG8-phosphatidylinositol conjugate and the ATG12-ATG5 conjugate to the pre-autophagosomal structure. ATG14 mediates the specific binding of the VPS34 PI3-kinase complex I to the preautophagosomal structure (PAS). Required for survival and/or proliferation in kidneys and in brain. The polypeptide is Autophagy-related protein 14 (Candida glabrata (strain ATCC 2001 / BCRC 20586 / JCM 3761 / NBRC 0622 / NRRL Y-65 / CBS 138) (Yeast)).